A 352-amino-acid chain; its full sequence is Isopentenyl-diphosphate delta-isomerase (352 aa).

Residue 6–7 (RK) coordinates substrate. FMN is bound by residues 63–65 (AMT), Ser93, and Asn122. 93 to 95 (SQR) contacts substrate. Position 160 (Gln160) interacts with substrate. Glu161 is a binding site for Mg(2+). Residues Lys192, Thr221, 271–273 (GIR), and 292–293 (SQ) each bind FMN.

This sequence belongs to the IPP isomerase type 2 family. As to quaternary structure, homooctamer. Dimer of tetramers. Requires FMN as cofactor. NADPH is required as a cofactor. It depends on Mg(2+) as a cofactor.

It is found in the cytoplasm. The catalysed reaction is isopentenyl diphosphate = dimethylallyl diphosphate. In terms of biological role, involved in the biosynthesis of isoprenoids. Catalyzes the 1,3-allylic rearrangement of the homoallylic substrate isopentenyl (IPP) to its allylic isomer, dimethylallyl diphosphate (DMAPP). The polypeptide is Isopentenyl-diphosphate delta-isomerase (Pyrobaculum arsenaticum (strain DSM 13514 / JCM 11321 / PZ6)).